A 471-amino-acid chain; its full sequence is Eukaryotic translation initiation factor 3 subunit L (471 aa).

The region spanning 252-446 is the PCI domain; sequence DAIRMFSHIL…DLDYAMQGDL (195 aa).

Belongs to the eIF-3 subunit L family.

The protein resides in the cytoplasm. Its function is as follows. Component of the eukaryotic translation initiation factor 3 (eIF-3) complex, which is involved in protein synthesis of a specialized repertoire of mRNAs and, together with other initiation factors, stimulates binding of mRNA and methionyl-tRNAi to the 40S ribosome. The eIF-3 complex specifically targets and initiates translation of a subset of mRNAs involved in cell proliferation. In Pyricularia oryzae (strain Y34) (Rice blast fungus), this protein is Eukaryotic translation initiation factor 3 subunit L.